The chain runs to 145 residues: Group IID secretory phospholipase A2 (145 aa).

The first 20 residues, 1 to 20 (MELALLCGLVVMAGVIPIQG), serve as a signal peptide directing secretion. Intrachain disulfides connect C46–C138, C48–C64, C63–C118, C69–C145, C70–C111, C79–C104, and C97–C109. H47, G49, and G51 together coordinate Ca(2+). The active site involves H67. D68 is a binding site for Ca(2+). N89 carries an N-linked (GlcNAc...) asparagine glycan. Residue D112 is part of the active site.

This sequence belongs to the phospholipase A2 family. The cofactor is Ca(2+). In terms of tissue distribution, highly expressed in pancreas and spleen and less abundantly in colon, thymus, placenta, small intestine, and prostate.

It localises to the secreted. It catalyses the reaction a 1,2-diacyl-sn-glycero-3-phosphoethanolamine + H2O = a 1-acyl-sn-glycero-3-phosphoethanolamine + a fatty acid + H(+). It carries out the reaction 1-hexadecanoyl-2-(9Z-octadecenoyl)-sn-glycero-3-phosphoethanolamine + H2O = 1-hexadecanoyl-sn-glycero-3-phosphoethanolamine + (9Z)-octadecenoate + H(+). The catalysed reaction is 1-hexadecanoyl-2-(9Z,12Z-octadecadienoyl)-sn-glycero-3-phosphoethanolamine + H2O = 1-hexadecanoyl-sn-glycero-3-phosphoethanolamine + (9Z,12Z)-octadecadienoate + H(+). The enzyme catalyses 1,2-dihexadecanoyl-sn-glycero-3-phospho-(1'-sn-glycerol) + H2O = 1-hexadecanoyl-sn-glycero-3-phospho-(1'-sn-glycerol) + hexadecanoate + H(+). It catalyses the reaction 1-hexadecanoyl-2-(9Z-octadecenoyl)-sn-glycero-3-phospho-(1'-sn-glycerol) + H2O = 1-hexadecanoyl-sn-glycero-3-phospho-(1'-sn-glycerol) + (9Z)-octadecenoate + H(+). It carries out the reaction a 1,2-diacyl-sn-glycero-3-phosphocholine + H2O = a 1-acyl-sn-glycero-3-phosphocholine + a fatty acid + H(+). The catalysed reaction is 1,2-dihexadecanoyl-sn-glycero-3-phosphocholine + H2O = 1-hexadecanoyl-sn-glycero-3-phosphocholine + hexadecanoate + H(+). The enzyme catalyses 1-hexadecanoyl-2-(9Z-octadecenoyl)-sn-glycero-3-phosphocholine + H2O = 1-hexadecanoyl-sn-glycero-3-phosphocholine + (9Z)-octadecenoate + H(+). It catalyses the reaction 1-hexadecanoyl-2-(9Z,12Z-octadecadienoyl)-sn-glycero-3-phosphocholine + H2O = (9Z,12Z)-octadecadienoate + 1-hexadecanoyl-sn-glycero-3-phosphocholine + H(+). It carries out the reaction 1-hexadecanoyl-2-(4Z,7Z,10Z,13Z,16Z,19Z-docosahexaenoyl)-sn-glycero-3-phosphocholine + H2O = (4Z,7Z,10Z,13Z,16Z,19Z)-docosahexaenoate + 1-hexadecanoyl-sn-glycero-3-phosphocholine + H(+). Secretory calcium-dependent phospholipase A2 that primarily targets extracellular lipids, exerting anti-inflammatory and immunosuppressive functions. Hydrolyzes the ester bond of the fatty acyl group attached at sn-2 position of phospholipids (phospholipase A2 activity) with preference for phosphatidylethanolamines and phosphatidylglycerols over phosphatidylcholines. In draining lymph nodes, selectively hydrolyzes diacyl and alkenyl forms of phosphatidylethanolamines, releasing omega-3 polyunsaturated fatty acids (PUFAs) such as eicosapentaenoate and docosahexaenoate that are precursors of the anti-inflammatory lipid mediators, resolvins. During the resolution phase of acute inflammation drives docosahexaenoate-derived resolvin D1 synthesis, which suppresses dendritic cell activation and T-helper 1 immune response. May act in an autocrine and paracrine manner. Via a mechanism independent of its catalytic activity, promotes differentiation of regulatory T cells (Tregs) and participates in the maintenance of immune tolerance. May contribute to lipid remodeling of cellular membranes and generation of lipid mediators involved in pathogen clearance. Displays bactericidal activity against Gram-positive bacteria by directly hydrolyzing phospholipids of the bacterial membrane. This is Group IID secretory phospholipase A2 (PLA2G2D) from Homo sapiens (Human).